Consider the following 125-residue polypeptide: Small ribosomal subunit protein uS13 (125 aa).

Residues 93-125 form a disordered region; the sequence is RAGLPVRGQRTRTNARTRRGARKTVAGKKKATR. The span at 101–125 shows a compositional bias: basic residues; that stretch reads QRTRTNARTRRGARKTVAGKKKATR.

It belongs to the universal ribosomal protein uS13 family. In terms of assembly, part of the 30S ribosomal subunit. Forms a loose heterodimer with protein S19. Forms two bridges to the 50S subunit in the 70S ribosome.

Located at the top of the head of the 30S subunit, it contacts several helices of the 16S rRNA. In the 70S ribosome it contacts the 23S rRNA (bridge B1a) and protein L5 of the 50S subunit (bridge B1b), connecting the 2 subunits; these bridges are implicated in subunit movement. Contacts the tRNAs in the A and P-sites. The polypeptide is Small ribosomal subunit protein uS13 (Synechococcus elongatus (strain ATCC 33912 / PCC 7942 / FACHB-805) (Anacystis nidulans R2)).